The following is a 213-amino-acid chain: LexA repressor 2 (213 aa).

Positions 27 to 47 form a DNA-binding region, H-T-H motif; sequence QTEIARAFGFKGVRAAQYHLE. Catalysis depends on for autocatalytic cleavage activity residues Ser-133 and Lys-170.

It belongs to the peptidase S24 family. Homodimer.

It carries out the reaction Hydrolysis of Ala-|-Gly bond in repressor LexA.. In terms of biological role, represses a number of genes involved in the response to DNA damage (SOS response), including recA and lexA. In the presence of single-stranded DNA, RecA interacts with LexA causing an autocatalytic cleavage which disrupts the DNA-binding part of LexA, leading to derepression of the SOS regulon and eventually DNA repair. This is LexA repressor 2 from Xanthomonas campestris pv. campestris (strain ATCC 33913 / DSM 3586 / NCPPB 528 / LMG 568 / P 25).